A 70-amino-acid polypeptide reads, in one-letter code: Putative membrane protein insertion efficiency factor (70 aa).

Belongs to the UPF0161 family.

It localises to the cell membrane. Functionally, could be involved in insertion of integral membrane proteins into the membrane. The protein is Putative membrane protein insertion efficiency factor of Clostridium novyi (strain NT).